A 418-amino-acid polypeptide reads, in one-letter code: Probable serine/threonine-protein kinase nek2 (418 aa).

The Protein kinase domain occupies 4–264 (YEILGALGKG…VNELLGYSFI (261 aa)). ATP-binding positions include 10–18 (LGKGSFGVV) and lysine 33. Residue aspartate 135 is the Proton acceptor of the active site. A coiled-coil region spans residues 278 to 363 (QGLKQMDEDL…SNLSLNCNNS (86 aa)).

It belongs to the protein kinase superfamily. NEK Ser/Thr protein kinase family. NIMA subfamily.

It carries out the reaction L-seryl-[protein] + ATP = O-phospho-L-seryl-[protein] + ADP + H(+). The catalysed reaction is L-threonyl-[protein] + ATP = O-phospho-L-threonyl-[protein] + ADP + H(+). Involved in centrosome biogenesis. Seems to be required for recruitment of centrosomal material and might be involved in de novo centrosome formation. The sequence is that of Probable serine/threonine-protein kinase nek2 (nek2) from Dictyostelium discoideum (Social amoeba).